The chain runs to 1368 residues: Beclin-1-like protein A (1368 aa).

2 stretches are compositionally biased toward low complexity: residues 24-57 and 122-135; these read GSGSGSNNNNNNNNNNNNINNNNNPNNNPNNNGP and NSIIENSNNSSPSN. Disordered regions lie at residues 24–64, 122–249, 331–431, 819–874, and 992–1048; these read GSGS…PSSE, NSII…SLMM, NKNN…STNS, TITP…NNNN, and IDGN…NDNN. Over residues 136-147 the composition is skewed to polar residues; that stretch reads AITRNNSFNMDP. Low complexity predominate over residues 148–167; sequence NNNNNNNNNNNNNNNNNNNN. Over residues 168 to 177 the composition is skewed to polar residues; the sequence is GEYMNSSIVF. A compositionally biased stretch (low complexity) spans 179–246; sequence NNVNNNNNNP…INNSVNSVNS (68 aa). Composition is skewed to low complexity over residues 992 to 1005 and 1015 to 1048; these read IDGNENKINGNDNN and NNNNNNNNNNNNNNNNNIYNNNNIEDYNNNNDNN. Positions 1047–1150 form a coiled coil; sequence NNYNFENEIN…AIRDQLERVS (104 aa).

It belongs to the beclin family.

The protein resides in the endosome membrane. Involved in autophagy. May be required to recruit the atg8-phosphatidylinositol conjugate and the atg12-atg5 conjugate to the pre-autophagosomal structure. Required for normal survival when exposed to pathogenic bacteria S.typhimurium by promoting autophagic degradation of intracellular S.typhimurium. The protein is Beclin-1-like protein A (atg6A) of Dictyostelium discoideum (Social amoeba).